A 340-amino-acid polypeptide reads, in one-letter code: Phenylalanine--tRNA ligase alpha subunit (340 aa).

E254 contacts Mg(2+).

The protein belongs to the class-II aminoacyl-tRNA synthetase family. Phe-tRNA synthetase alpha subunit type 1 subfamily. As to quaternary structure, tetramer of two alpha and two beta subunits. The cofactor is Mg(2+).

It localises to the cytoplasm. It catalyses the reaction tRNA(Phe) + L-phenylalanine + ATP = L-phenylalanyl-tRNA(Phe) + AMP + diphosphate + H(+). This is Phenylalanine--tRNA ligase alpha subunit from Caldicellulosiruptor bescii (strain ATCC BAA-1888 / DSM 6725 / KCTC 15123 / Z-1320) (Anaerocellum thermophilum).